The chain runs to 213 residues: Eukaryotic translation initiation factor 4E (213 aa).

Phosphoserine; by CK2 is present on residues Ser-2 and Ser-15. Thr-22 is modified (phosphothreonine). A phosphoserine mark is found at Ser-28 and Ser-30. Residue Lys-114 forms a Glycyl lysine isopeptide (Lys-Gly) (interchain with G-Cter in ubiquitin) linkage.

It belongs to the eukaryotic initiation factor 4E family. In terms of assembly, component of the eIF4F complex, which composition varies with external and internal environmental conditions. It is composed of at least eIF4A (TIF1/TIF2), eIF4E (TIF45) and eIF4G (TIF4631 or TIF4632). Interacts with PAT1 in a RNA-dependent manner. eIF4E is also known to interact with other partners.

Its subcellular location is the cytoplasm. The protein localises to the nucleus. Recognizes and binds the 7-methylguanosine (m7G)-containing mRNA cap during an early step in the initiation of protein synthesis and facilitates ribosome binding by inducing the unwinding of the mRNAs secondary structures. This Saccharomyces cerevisiae (strain ATCC 204508 / S288c) (Baker's yeast) protein is Eukaryotic translation initiation factor 4E (CDC33).